Reading from the N-terminus, the 537-residue chain is Glucose-6-phosphate isomerase (537 aa).

E355 acts as the Proton donor in catalysis. Active-site residues include H386 and K501.

Belongs to the GPI family.

It is found in the cytoplasm. It catalyses the reaction alpha-D-glucose 6-phosphate = beta-D-fructose 6-phosphate. The protein operates within carbohydrate biosynthesis; gluconeogenesis. It functions in the pathway carbohydrate degradation; glycolysis; D-glyceraldehyde 3-phosphate and glycerone phosphate from D-glucose: step 2/4. Catalyzes the reversible isomerization of glucose-6-phosphate to fructose-6-phosphate. In Protochlamydia amoebophila (strain UWE25), this protein is Glucose-6-phosphate isomerase.